The chain runs to 345 residues: Methylthioribose-1-phosphate isomerase (345 aa).

Substrate contacts are provided by residues 47–49 (RGA), R90, and Q197. D238 acts as the Proton donor in catalysis. Residue 248-249 (NK) participates in substrate binding.

Belongs to the eIF-2B alpha/beta/delta subunits family. MtnA subfamily.

The enzyme catalyses 5-(methylsulfanyl)-alpha-D-ribose 1-phosphate = 5-(methylsulfanyl)-D-ribulose 1-phosphate. It participates in amino-acid biosynthesis; L-methionine biosynthesis via salvage pathway; L-methionine from S-methyl-5-thio-alpha-D-ribose 1-phosphate: step 1/6. Its function is as follows. Catalyzes the interconversion of methylthioribose-1-phosphate (MTR-1-P) into methylthioribulose-1-phosphate (MTRu-1-P). The polypeptide is Methylthioribose-1-phosphate isomerase (Thermoanaerobacter pseudethanolicus (strain ATCC 33223 / 39E) (Clostridium thermohydrosulfuricum)).